The chain runs to 79 residues: D-alanyl carrier protein (79 aa).

In terms of domain architecture, Carrier spans 1–77; it reads MDTKQAVLDI…KIIAKVESLR (77 aa). Serine 35 carries the post-translational modification O-(pantetheine 4'-phosphoryl)serine.

It belongs to the DltC family. Post-translationally, 4'-phosphopantetheine is transferred from CoA to a specific serine of apo-DCP.

It localises to the cytoplasm. The protein operates within cell wall biogenesis; lipoteichoic acid biosynthesis. Its function is as follows. Carrier protein involved in the D-alanylation of lipoteichoic acid (LTA). The loading of thioester-linked D-alanine onto DltC is catalyzed by D-alanine--D-alanyl carrier protein ligase DltA. The DltC-carried D-alanyl group is further transferred to cell membrane phosphatidylglycerol (PG) by forming an ester bond, probably catalyzed by DltD. D-alanylation of LTA plays an important role in modulating the properties of the cell wall in Gram-positive bacteria, influencing the net charge of the cell wall. In Lactobacillus johnsonii (strain CNCM I-12250 / La1 / NCC 533), this protein is D-alanyl carrier protein.